An 805-amino-acid chain; its full sequence is Probable inorganic carbon transporter subunit DabA (805 aa).

Residues C334, D336, H491, and C506 each contribute to the Zn(2+) site.

This sequence belongs to the inorganic carbon transporter (TC 9.A.2) DabA family. As to quaternary structure, forms a complex with DabB. Zn(2+) serves as cofactor.

It is found in the cell inner membrane. Part of an energy-coupled inorganic carbon pump. This chain is Probable inorganic carbon transporter subunit DabA, found in Ruegeria sp. (strain TM1040) (Silicibacter sp.).